We begin with the raw amino-acid sequence, 366 residues long: Fructose-bisphosphate aldolase 1 (366 aa).

Substrate-binding residues include arginine 56 and lysine 147. Residue glutamate 189 is the Proton acceptor of the active site. The active-site Schiff-base intermediate with dihydroxyacetone-P is the lysine 231.

Belongs to the class I fructose-bisphosphate aldolase family. Ubiquitous.

It catalyses the reaction beta-D-fructose 1,6-bisphosphate = D-glyceraldehyde 3-phosphate + dihydroxyacetone phosphate. It participates in carbohydrate degradation; glycolysis; D-glyceraldehyde 3-phosphate and glycerone phosphate from D-glucose: step 4/4. Its function is as follows. May be involved in the metabolism of fructose-bisphosphate (beta-D-fructose 1,6-bisphosphate) and of fructose 1-phosphate. The polypeptide is Fructose-bisphosphate aldolase 1 (aldo-1) (Caenorhabditis elegans).